A 227-amino-acid polypeptide reads, in one-letter code: 2,3-bisphosphoglycerate-dependent phosphoglycerate mutase (227 aa).

Substrate contacts are provided by residues 8-15 (RHGKSVWN), 21-22 (TG), R58, 110-113 (ERMY), K121, 137-138 (RR), and 181-182 (GN). H9 serves as the catalytic Tele-phosphohistidine intermediate. Residue E110 is the Proton donor/acceptor of the active site.

Belongs to the phosphoglycerate mutase family. BPG-dependent PGAM subfamily.

It catalyses the reaction (2R)-2-phosphoglycerate = (2R)-3-phosphoglycerate. It functions in the pathway carbohydrate degradation; glycolysis; pyruvate from D-glyceraldehyde 3-phosphate: step 3/5. In terms of biological role, catalyzes the interconversion of 2-phosphoglycerate and 3-phosphoglycerate. This chain is 2,3-bisphosphoglycerate-dependent phosphoglycerate mutase, found in Chlamydia felis (strain Fe/C-56) (Chlamydophila felis).